Reading from the N-terminus, the 429-residue chain is MKKQRNLRSMAAQAVEQVVEQGQSLSNILPPLQQKVSDKDKALLQELCFGVLRTLSQLDWLINKLMARPMTGKQRTVHYLIMVGLYQLLYTRIPPHAALAETVEGAVAIKRPQLKGLINGVLRQFQRQQEELLAEFNASDACYLHPSWLLKRLQKAYPEQWQSIVEANNQRPPMWLRVNRTHHSRDSWLALLDEAGMKGFPHADYPDAVRLETPAPVHVLPGFEEGWVTVQDASAQGCMAWLAPQNGEHILDLCAAPGGKTTHILEVAPEAQVVAVDIDEQRLSRVYDNLKRLGMKATVKQGDGRYPSQWCGEQQFDRILLDAPCSATGVIRRHPDIKWLRRDRDIPELAQLQSEILDAIWPHLKSGGTLIYATCSVLPEENSLQIKAFLQRTADAELCETGTPEQPGKQNLPGAEEGDGFFYAKLIKK.

Residues 254-260, Asp277, Asp303, and Asp322 each bind S-adenosyl-L-methionine; that span reads CAAPGGK. Residue Cys375 is the Nucleophile of the active site.

The protein belongs to the class I-like SAM-binding methyltransferase superfamily. RsmB/NOP family.

Its subcellular location is the cytoplasm. It carries out the reaction cytidine(967) in 16S rRNA + S-adenosyl-L-methionine = 5-methylcytidine(967) in 16S rRNA + S-adenosyl-L-homocysteine + H(+). Functionally, specifically methylates the cytosine at position 967 (m5C967) of 16S rRNA. This Escherichia coli O17:K52:H18 (strain UMN026 / ExPEC) protein is Ribosomal RNA small subunit methyltransferase B.